Here is a 264-residue protein sequence, read N- to C-terminus: Osteopontin (264 aa).

A signal peptide spans 1–16 (MKLAFLCLCFISIAAA). Disordered stretches follow at residues 21–141 (KSRQ…RGDS) and 166–264 (IEDD…EVTR). A compositionally biased stretch (basic and acidic residues) spans 31-51 (SEEKYDPRSHHTHRYHQDHVD). Residues 52–73 (SQSQEHLQQTQNDLASLQQTHY) show a composition bias toward polar residues. Over residues 97-118 (AVDDDDDDDNDSNDTDESDEVV) the composition is skewed to acidic residues. Asn106 and Asn109 each carry an N-linked (GlcNAc...) asparagine glycan. Residues 132-134 (RGD) carry the Cell attachment site motif. The span at 186–212 (KESREQDSRELAQHQSVENDSRPRFDS) shows a compositional bias: basic and acidic residues. N-linked (GlcNAc...) asparagine glycosylation is found at Asn204 and Asn242. The segment covering 233–246 (ASRSAVDTSNQTLE) has biased composition (polar residues). The span at 252–264 (EDRHSIENNEVTR) shows a compositional bias: basic and acidic residues.

The protein belongs to the osteopontin family. In terms of processing, extensively phosphorylated on serine residues.

It localises to the secreted. Its function is as follows. Major non-collagenous bone protein that binds tightly to hydroxyapatite. Appears to form an integral part of the mineralized matrix. Probably important to cell-matrix interaction. In terms of biological role, acts as a cytokine involved in enhancing production of interferon-gamma and interleukin-12 and reducing production of interleukin-10 and is essential in the pathway that leads to type I immunity. The chain is Osteopontin (SPP1) from Gallus gallus (Chicken).